A 597-amino-acid polypeptide reads, in one-letter code: Elongation factor 4 (597 aa).

The region spanning 2-184 (DHIRNFSIIA…SLIAKVPPPK (183 aa)) is the tr-type G domain. GTP is bound by residues 14–19 (DHGKST) and 131–134 (NKID).

It belongs to the TRAFAC class translation factor GTPase superfamily. Classic translation factor GTPase family. LepA subfamily.

It is found in the cell inner membrane. It carries out the reaction GTP + H2O = GDP + phosphate + H(+). Required for accurate and efficient protein synthesis under certain stress conditions. May act as a fidelity factor of the translation reaction, by catalyzing a one-codon backward translocation of tRNAs on improperly translocated ribosomes. Back-translocation proceeds from a post-translocation (POST) complex to a pre-translocation (PRE) complex, thus giving elongation factor G a second chance to translocate the tRNAs correctly. Binds to ribosomes in a GTP-dependent manner. The sequence is that of Elongation factor 4 from Burkholderia cenocepacia (strain HI2424).